A 758-amino-acid chain; its full sequence is Probable ubiquitin carboxyl-terminal hydrolase creB (758 aa).

The segment at 1–27 is disordered; it reads MGSFLRSFRRDVGSSTPSVGATPAKKE. In terms of domain architecture, USP spans 57-468; that stretch reads FGMENYGNTC…CAYVLFYQET (412 aa). Cys-66 serves as the catalytic Nucleophile. Disordered regions lie at residues 116–148 and 243–268; these read AEAQ…DSSE and QPIP…SKTP. Over residues 253–268 the composition is skewed to polar residues; sequence TTDSSRQSISSGSKTP. His-419 functions as the Proton acceptor in the catalytic mechanism. The disordered stretch occupies residues 514–744; sequence IPVQDEPQRH…KGDRAGHGKW (231 aa). A compositionally biased stretch (pro residues) spans 554 to 563; the sequence is ATPPPVPPIP. The stretch at 573 to 631 forms a coiled coil; that stretch reads KKSDIQSKKERAKEEKERKAAEKEMEKQRRKEQEARVKENQRREEAELKAALEASKASK. Composition is skewed to basic and acidic residues over residues 573–650 and 729–740; these read KKSD…DPKR and DALKSPKGDRAG.

The protein belongs to the peptidase C19 family. As to quaternary structure, interacts with creA, creC and qutD.

The catalysed reaction is Thiol-dependent hydrolysis of ester, thioester, amide, peptide and isopeptide bonds formed by the C-terminal Gly of ubiquitin (a 76-residue protein attached to proteins as an intracellular targeting signal).. Its function is as follows. Ubiquitin thioesterase component of the regulatory network controlling carbon source utilization through ubiquitination and deubiquitination involving creA, creB, creC, creD and acrB. Deubiquitinates the creA catabolic repressor and the quinate permease qutD. Also plays a role in response to carbon starvation and the control of extracellular proteases activity. In Aspergillus niger (strain ATCC MYA-4892 / CBS 513.88 / FGSC A1513), this protein is Probable ubiquitin carboxyl-terminal hydrolase creB (creB).